Consider the following 154-residue polypeptide: Deoxyuridine 5'-triphosphate nucleotidohydrolase (154 aa).

Substrate is bound by residues R72–G74, N85, L89–D91, and M99.

Belongs to the dUTPase family. The cofactor is Mg(2+).

The catalysed reaction is dUTP + H2O = dUMP + diphosphate + H(+). Its pathway is pyrimidine metabolism; dUMP biosynthesis; dUMP from dCTP (dUTP route): step 2/2. This enzyme is involved in nucleotide metabolism: it produces dUMP, the immediate precursor of thymidine nucleotides and it decreases the intracellular concentration of dUTP so that uracil cannot be incorporated into DNA. This is Deoxyuridine 5'-triphosphate nucleotidohydrolase from Psychrobacter arcticus (strain DSM 17307 / VKM B-2377 / 273-4).